The following is a 120-amino-acid chain: Seripauperin-6 (120 aa).

The N-terminal stretch at 1 to 20 (MVKLTSIAAGVAAIAATASA) is a signal peptide.

It belongs to the SRP1/TIP1 family. Seripauperin subfamily.

The sequence is that of Seripauperin-6 (PAU6) from Saccharomyces cerevisiae (strain ATCC 204508 / S288c) (Baker's yeast).